The sequence spans 208 residues: Proteasome subunit beta 2 (208 aa).

Positions 1–14 (MGNELQLENKILKG) are cleaved as a propeptide — removed in mature form; by autocatalysis. The active-site Nucleophile is the T15.

The protein belongs to the peptidase T1B family. As to quaternary structure, the 20S proteasome core is composed of 14 alpha and 14 beta subunits that assemble into four stacked heptameric rings, resulting in a barrel-shaped structure. The two inner rings, each composed of seven catalytic beta subunits, are sandwiched by two outer rings, each composed of seven alpha subunits. The catalytic chamber with the active sites is on the inside of the barrel. Has a gated structure, the ends of the cylinder being occluded by the N-termini of the alpha-subunits. Is capped at one or both ends by the proteasome regulatory ATPase, PAN.

The protein localises to the cytoplasm. It catalyses the reaction Cleavage of peptide bonds with very broad specificity.. Its activity is regulated as follows. The formation of the proteasomal ATPase PAN-20S proteasome complex, via the docking of the C-termini of PAN into the intersubunit pockets in the alpha-rings, triggers opening of the gate for substrate entry. Interconversion between the open-gate and close-gate conformations leads to a dynamic regulation of the 20S proteasome proteolysis activity. Functionally, component of the proteasome core, a large protease complex with broad specificity involved in protein degradation. In Saccharolobus solfataricus (strain ATCC 35092 / DSM 1617 / JCM 11322 / P2) (Sulfolobus solfataricus), this protein is Proteasome subunit beta 2.